The primary structure comprises 166 residues: Plastocyanin, chloroplastic (166 aa).

The N-terminal 67 residues, 1 to 67 (MASLTSAAVT…GAVLASNALA (67 aa)), are a transit peptide targeting the chloroplast. The 99-residue stretch at 68-166 (VEVLLGGSDG…AGMAGKITVN (99 aa)) folds into the Plastocyanin-like domain. Cu cation contacts are provided by H104, C151, H154, and M159.

The protein belongs to the plastocyanin family. The cofactor is Cu(2+).

The protein resides in the plastid. It is found in the chloroplast thylakoid membrane. Functionally, participates in electron transfer between P700 and the cytochrome b6-f complex in photosystem I. This Fritillaria agrestis (Stinkbells) protein is Plastocyanin, chloroplastic (PETE).